Consider the following 914-residue polypeptide: WAG22 antigen (914 aa).

In terms of domain architecture, PE spans Met-1–Ala-93. Disordered regions lie at residues Gly-412–Ala-431 and Ala-895–Thr-914. Gly residues predominate over residues Ala-895–Val-904.

This sequence belongs to the mycobacterial PE family. PGRS subfamily.

This chain is WAG22 antigen (wag22), found in Mycobacterium bovis (strain ATCC BAA-935 / AF2122/97).